A 231-amino-acid polypeptide reads, in one-letter code: 5'-methylthioadenosine/S-adenosylhomocysteine nucleosidase (231 aa).

Residue Glu12 is the Proton acceptor of the active site. Substrate-binding positions include Gly78, Ile153, and 174–175 (ME). Asp198 functions as the Proton donor in the catalytic mechanism.

Belongs to the PNP/UDP phosphorylase family. MtnN subfamily.

The enzyme catalyses S-adenosyl-L-homocysteine + H2O = S-(5-deoxy-D-ribos-5-yl)-L-homocysteine + adenine. It carries out the reaction S-methyl-5'-thioadenosine + H2O = 5-(methylsulfanyl)-D-ribose + adenine. It catalyses the reaction 5'-deoxyadenosine + H2O = 5-deoxy-D-ribose + adenine. The protein operates within amino-acid biosynthesis; L-methionine biosynthesis via salvage pathway; S-methyl-5-thio-alpha-D-ribose 1-phosphate from S-methyl-5'-thioadenosine (hydrolase route): step 1/2. Catalyzes the irreversible cleavage of the glycosidic bond in both 5'-methylthioadenosine (MTA) and S-adenosylhomocysteine (SAH/AdoHcy) to adenine and the corresponding thioribose, 5'-methylthioribose and S-ribosylhomocysteine, respectively. Also cleaves 5'-deoxyadenosine, a toxic by-product of radical S-adenosylmethionine (SAM) enzymes, into 5-deoxyribose and adenine. In Shewanella sp. (strain W3-18-1), this protein is 5'-methylthioadenosine/S-adenosylhomocysteine nucleosidase.